Reading from the N-terminus, the 583-residue chain is Protein NRT1/ PTR FAMILY 5.1 (583 aa).

Residues 74–94 (WSGAVWITPIAGAYIADSYIG) form a helical membrane-spanning segment. Thr98 is modified (phosphothreonine). Transmembrane regions (helical) follow at residues 99–119 (FTASSLIYVLGMILLTMAVTV), 134–154 (ASSLQVTFFYISLYTIAIGAG), 182–202 (FFNWWMFSSFLGALFATLGLV), 210–230 (WGLGYGIPTVGLLVSLVVFYI), 320–340 (VLGLIFIWLVTLIPSTLWAQV), 361–381 (IPAASLGSFVTLSMLLSVPMY), 405–425 (LGVGFAIQIVAIAIASAVEVK), 446–466 (IFWLLPQYSLLGIGDVFNAIG), 485–505 (TFFTSGIGLGNFLNSFLVTMI), and 529–549 (YYYGFLVVISIVNMGLFVWAA).

Belongs to the major facilitator superfamily. Proton-dependent oligopeptide transporter (POT/PTR) (TC 2.A.17) family. As to expression, expressed in flowers. Detected in stems, leaves and siliques.

Its subcellular location is the membrane. In Arabidopsis thaliana (Mouse-ear cress), this protein is Protein NRT1/ PTR FAMILY 5.1 (NPF5.1).